We begin with the raw amino-acid sequence, 544 residues long: Probable protein kinase UbiB (544 aa).

The region spanning Asp123–Leu501 is the Protein kinase domain. ATP-binding positions include Leu129–Val137 and Lys152. The active-site Proton acceptor is the Asp287. A helical transmembrane segment spans residues Leu515 to Phe537.

This sequence belongs to the ABC1 family. UbiB subfamily.

It localises to the cell inner membrane. The protein operates within cofactor biosynthesis; ubiquinone biosynthesis [regulation]. Is probably a protein kinase regulator of UbiI activity which is involved in aerobic coenzyme Q (ubiquinone) biosynthesis. The chain is Probable protein kinase UbiB from Aliivibrio fischeri (strain ATCC 700601 / ES114) (Vibrio fischeri).